We begin with the raw amino-acid sequence, 262 residues long: ATP synthase subunit a (262 aa).

5 consecutive transmembrane segments (helical) span residues 24 to 44, 84 to 104, 129 to 149, 194 to 214, and 228 to 248; these read AVHL…LFVF, VIAP…AIDL, DISA…FYTV, LFGN…MYMA, and LVWA…FMML.

This sequence belongs to the ATPase A chain family. As to quaternary structure, F-type ATPases have 2 components, CF(1) - the catalytic core - and CF(0) - the membrane proton channel. CF(1) has five subunits: alpha(3), beta(3), gamma(1), delta(1), epsilon(1). CF(0) has three main subunits: a(1), b(2) and c(9-12). The alpha and beta chains form an alternating ring which encloses part of the gamma chain. CF(1) is attached to CF(0) by a central stalk formed by the gamma and epsilon chains, while a peripheral stalk is formed by the delta and b chains.

It is found in the cell inner membrane. Key component of the proton channel; it plays a direct role in the translocation of protons across the membrane. In Actinobacillus pleuropneumoniae serotype 3 (strain JL03), this protein is ATP synthase subunit a.